A 152-amino-acid polypeptide reads, in one-letter code: Melatonin receptor type 1B (152 aa).

Over 1-12 the chain is Cytoplasmic; that stretch reads HSFVYEKLFSLW. The helical transmembrane segment at 13-33 threads the bilayer; sequence NTILYVCLIWTLTVVATVPNF. The Extracellular portion of the chain corresponds to 34–57; that stretch reads FVGSLEYDPRIYSCTFVQTVSSSY. The chain crosses the membrane as a helical span at residues 58-78; that stretch reads TITVVVIHFILPITVVTFCYL. Residues 79–110 are Cytoplasmic-facing; sequence RIWILVIQVRRKVKSEFKPRMKQSDFRNFLTM. A helical membrane pass occupies residues 111-131; the sequence is FVVFVIFAFCWAPLNFIGLAV. Over 132 to 144 the chain is Extracellular; sequence SINPTEVAPKIPE. Residues 145–152 traverse the membrane as a helical segment; the sequence is WLFVVSYF.

This sequence belongs to the G-protein coupled receptor 1 family.

The protein localises to the cell membrane. Its function is as follows. High affinity receptor for melatonin. The activity of this receptor is mediated by pertussis toxin sensitive G proteins that inhibits adenylate cyclase activity. This is Melatonin receptor type 1B (mtnr1b) from Xenopus laevis (African clawed frog).